The following is a 263-amino-acid chain: Acyl-[acyl-carrier-protein]--UDP-N-acetylglucosamine O-acyltransferase (263 aa).

It belongs to the transferase hexapeptide repeat family. LpxA subfamily. As to quaternary structure, homotrimer.

The protein localises to the cytoplasm. It catalyses the reaction a (3R)-hydroxyacyl-[ACP] + UDP-N-acetyl-alpha-D-glucosamine = a UDP-3-O-[(3R)-3-hydroxyacyl]-N-acetyl-alpha-D-glucosamine + holo-[ACP]. Its pathway is glycolipid biosynthesis; lipid IV(A) biosynthesis; lipid IV(A) from (3R)-3-hydroxytetradecanoyl-[acyl-carrier-protein] and UDP-N-acetyl-alpha-D-glucosamine: step 1/6. Involved in the biosynthesis of lipid A, a phosphorylated glycolipid that anchors the lipopolysaccharide to the outer membrane of the cell. The protein is Acyl-[acyl-carrier-protein]--UDP-N-acetylglucosamine O-acyltransferase of Campylobacter jejuni subsp. doylei (strain ATCC BAA-1458 / RM4099 / 269.97).